Consider the following 310-residue polypeptide: Glutaminase 1 (310 aa).

Substrate is bound by residues Ser66, Asn117, Glu161, Asn168, Tyr192, Tyr244, and Val262. Lys294 carries the N6-acetyllysine modification.

This sequence belongs to the glutaminase family. In terms of assembly, homotetramer.

The enzyme catalyses L-glutamine + H2O = L-glutamate + NH4(+). The protein is Glutaminase 1 of Escherichia coli (strain K12).